Consider the following 370-residue polypeptide: Chorismate synthase (370 aa).

Arginine 48 provides a ligand contact to NADP(+). FMN is bound by residues 125–127 (RSS), 241–242 (NA), glycine 286, 301–305 (KPTSS), and arginine 327.

This sequence belongs to the chorismate synthase family. As to quaternary structure, homotetramer. FMNH2 is required as a cofactor.

The catalysed reaction is 5-O-(1-carboxyvinyl)-3-phosphoshikimate = chorismate + phosphate. The protein operates within metabolic intermediate biosynthesis; chorismate biosynthesis; chorismate from D-erythrose 4-phosphate and phosphoenolpyruvate: step 7/7. Catalyzes the anti-1,4-elimination of the C-3 phosphate and the C-6 proR hydrogen from 5-enolpyruvylshikimate-3-phosphate (EPSP) to yield chorismate, which is the branch point compound that serves as the starting substrate for the three terminal pathways of aromatic amino acid biosynthesis. This reaction introduces a second double bond into the aromatic ring system. This is Chorismate synthase from Ruegeria sp. (strain TM1040) (Silicibacter sp.).